Here is a 447-residue protein sequence, read N- to C-terminus: N-succinylarginine dihydrolase (447 aa).

Substrate contacts are provided by residues 19–28 (AGLSFGNEAS), Asn110, and 137–138 (HR). Glu174 is an active-site residue. Arg213 contacts substrate. His249 is a catalytic residue. 2 residues coordinate substrate: Asp251 and Asn364. Catalysis depends on Cys370, which acts as the Nucleophile.

This sequence belongs to the succinylarginine dihydrolase family. As to quaternary structure, homodimer.

The catalysed reaction is N(2)-succinyl-L-arginine + 2 H2O + 2 H(+) = N(2)-succinyl-L-ornithine + 2 NH4(+) + CO2. It functions in the pathway amino-acid degradation; L-arginine degradation via AST pathway; L-glutamate and succinate from L-arginine: step 2/5. In terms of biological role, catalyzes the hydrolysis of N(2)-succinylarginine into N(2)-succinylornithine, ammonia and CO(2). This chain is N-succinylarginine dihydrolase, found in Yersinia pseudotuberculosis serotype O:1b (strain IP 31758).